The chain runs to 141 residues: Large ribosomal subunit protein uL16 (141 aa).

This sequence belongs to the universal ribosomal protein uL16 family. As to quaternary structure, part of the 50S ribosomal subunit.

Functionally, binds 23S rRNA and is also seen to make contacts with the A and possibly P site tRNAs. The chain is Large ribosomal subunit protein uL16 from Petrotoga mobilis (strain DSM 10674 / SJ95).